Here is a 490-residue protein sequence, read N- to C-terminus: Betaine aldehyde dehydrogenase (490 aa).

Residues isoleucine 27 and aspartate 93 each contribute to the K(+) site. 150–152 provides a ligand contact to NAD(+); it reads GAW. Lysine 162 functions as the Charge relay system in the catalytic mechanism. 176–179 lines the NAD(+) pocket; the sequence is KPSE. Valine 180 is a binding site for K(+). 230–233 lines the NAD(+) pocket; sequence GTTT. Residue leucine 246 coordinates K(+). The active-site Proton acceptor is the glutamate 252. Residues glycine 254, cysteine 286, and glutamate 387 each contribute to the NAD(+) site. Catalysis depends on cysteine 286, which acts as the Nucleophile. Residue cysteine 286 is modified to Cysteine sulfenic acid (-SOH). K(+) is bound by residues lysine 457 and glycine 460. The Charge relay system role is filled by glutamate 464.

This sequence belongs to the aldehyde dehydrogenase family. In terms of assembly, dimer of dimers. K(+) serves as cofactor.

The catalysed reaction is betaine aldehyde + NAD(+) + H2O = glycine betaine + NADH + 2 H(+). It participates in amine and polyamine biosynthesis; betaine biosynthesis via choline pathway; betaine from betaine aldehyde: step 1/1. Functionally, involved in the biosynthesis of the osmoprotectant glycine betaine. Catalyzes the irreversible oxidation of betaine aldehyde to the corresponding acid. This chain is Betaine aldehyde dehydrogenase, found in Pseudomonas putida (strain GB-1).